The chain runs to 107 residues: High mobility group protein HMG-I/HMG-Y (107 aa).

A disordered region spans residues 1-107 (MSESSSKSSQ…ISQESSEEEQ (107 aa)). The residue at position 2 (Ser2) is an N-acetylserine. Lys7 bears the N6-acetyllysine mark. Ser8 carries the post-translational modification ADP-ribosylserine. Ser9 carries the ADP-ribosylserine; alternate modification. At Ser9 the chain carries Phosphoserine; alternate. Lys15 is subject to N6-acetyllysine; alternate. Lys15 participates in a covalent cross-link: Glycyl lysine isopeptide (Lys-Gly) (interchain with G-Cter in SUMO2); alternate. Basic and acidic residues predominate over residues 15–24 (KQEKDGTEKR). The segment at residues 21-31 (TEKRGRGRPRK) is a DNA-binding region (a.T hook 1). At Arg26 the chain carries Asymmetric dimethylarginine; alternate. The residue at position 26 (Arg26) is an Omega-N-methylarginine; alternate. Residue Arg26 is modified to Symmetric dimethylarginine; alternate. A Phosphoserine; by HIPK2 and CDC2 modification is found at Ser36. The residue at position 39 (Thr39) is a Phosphothreonine. 2 positions are modified to phosphoserine: Ser44 and Ser49. Thr53 carries the post-translational modification Phosphothreonine; by HIPK2 and CDC2. 2 DNA-binding regions (a.T hook) span residues 53-63 (TPKRPRGRPKG) and 78-89 (APGRKPRGRPKK). The interval 53–77 (TPKRPRGRPKGSKNKGAAKTRKATT) is interaction with HIPK2. Basic residues predominate over residues 55-74 (KRPRGRPKGSKNKGAAKTRK). Asymmetric dimethylarginine; by PRMT6; alternate is present on residues Arg58 and Arg60. Omega-N-methylarginine; by PRMT6; alternate is present on residues Arg58 and Arg60. Acidic residues predominate over residues 93-107 (EEEEGISQESSEEEQ). A phosphoserine mark is found at Ser99, Ser102, and Ser103.

It belongs to the HMGA family. In terms of assembly, interacts with HIPK2. Post-translationally, isoforms HMG-I and HMG-Y can be phosphorylated by HIPK2. Phosphorylation may modulate DNA-binding affinity. Methylation at Arg-58 is mutually exclusive with methylation at Arg-60.

The protein localises to the nucleus. Its subcellular location is the chromosome. Its function is as follows. HMG-I/Y bind preferentially to the minor groove of A+T rich regions in double-stranded DNA. It is suggested that these proteins could function in nucleosome phasing and in the 3'-end processing of mRNA transcripts. They are also involved in the transcription regulation of genes containing, or in close proximity to A+T-rich regions. This Cricetulus griseus (Chinese hamster) protein is High mobility group protein HMG-I/HMG-Y (HMGA1).